The sequence spans 90 residues: UPF0223 protein lmo1058 (90 aa).

The protein belongs to the UPF0223 family.

The polypeptide is UPF0223 protein lmo1058 (Listeria monocytogenes serovar 1/2a (strain ATCC BAA-679 / EGD-e)).